The primary structure comprises 333 residues: Holliday junction branch migration complex subunit RuvB (333 aa).

Residues 1-182 (MDERLLSQSH…FGVTLKLEYY (182 aa)) are large ATPase domain (RuvB-L). Residues L21, R22, G63, K66, T67, T68, 129-131 (EDY), R172, Y182, and R219 each bind ATP. T67 contacts Mg(2+). Positions 183-253 (ETHELAAIVS…LASDALDRLH (71 aa)) are small ATPAse domain (RuvB-S). The head domain (RuvB-H) stretch occupies residues 256–333 (ALGLDEVDHR…SHFGYEEEEE (78 aa)). DNA contacts are provided by R311 and R316.

The protein belongs to the RuvB family. Homohexamer. Forms an RuvA(8)-RuvB(12)-Holliday junction (HJ) complex. HJ DNA is sandwiched between 2 RuvA tetramers; dsDNA enters through RuvA and exits via RuvB. An RuvB hexamer assembles on each DNA strand where it exits the tetramer. Each RuvB hexamer is contacted by two RuvA subunits (via domain III) on 2 adjacent RuvB subunits; this complex drives branch migration. In the full resolvosome a probable DNA-RuvA(4)-RuvB(12)-RuvC(2) complex forms which resolves the HJ.

It localises to the cytoplasm. It catalyses the reaction ATP + H2O = ADP + phosphate + H(+). In terms of biological role, the RuvA-RuvB-RuvC complex processes Holliday junction (HJ) DNA during genetic recombination and DNA repair, while the RuvA-RuvB complex plays an important role in the rescue of blocked DNA replication forks via replication fork reversal (RFR). RuvA specifically binds to HJ cruciform DNA, conferring on it an open structure. The RuvB hexamer acts as an ATP-dependent pump, pulling dsDNA into and through the RuvAB complex. RuvB forms 2 homohexamers on either side of HJ DNA bound by 1 or 2 RuvA tetramers; 4 subunits per hexamer contact DNA at a time. Coordinated motions by a converter formed by DNA-disengaged RuvB subunits stimulates ATP hydrolysis and nucleotide exchange. Immobilization of the converter enables RuvB to convert the ATP-contained energy into a lever motion, pulling 2 nucleotides of DNA out of the RuvA tetramer per ATP hydrolyzed, thus driving DNA branch migration. The RuvB motors rotate together with the DNA substrate, which together with the progressing nucleotide cycle form the mechanistic basis for DNA recombination by continuous HJ branch migration. Branch migration allows RuvC to scan DNA until it finds its consensus sequence, where it cleaves and resolves cruciform DNA. The protein is Holliday junction branch migration complex subunit RuvB of Exiguobacterium sp. (strain ATCC BAA-1283 / AT1b).